A 181-amino-acid polypeptide reads, in one-letter code: Ribulose bisphosphate carboxylase small subunit, chloroplastic (181 aa).

The transit peptide at 1-54 (MASSMLSSAAVVTSQLQATMVAPFTGLKSSAAFPVTRKTNTDITSIASNGGRVS) directs the protein to the chloroplast.

Belongs to the RuBisCO small chain family. As to quaternary structure, heterohexadecamer of 8 large and 8 small subunits.

Its subcellular location is the plastid. It is found in the chloroplast. Its function is as follows. RuBisCO catalyzes two reactions: the carboxylation of D-ribulose 1,5-bisphosphate, the primary event in carbon dioxide fixation, as well as the oxidative fragmentation of the pentose substrate. Both reactions occur simultaneously and in competition at the same active site. Although the small subunit is not catalytic it is essential for maximal activity. The polypeptide is Ribulose bisphosphate carboxylase small subunit, chloroplastic (Raphanus sativus (Radish)).